Here is a 316-residue protein sequence, read N- to C-terminus: Pantothenate kinase (316 aa).

95–102 (GSVAVGKS) serves as a coordination point for ATP.

The protein belongs to the prokaryotic pantothenate kinase family.

The protein localises to the cytoplasm. It carries out the reaction (R)-pantothenate + ATP = (R)-4'-phosphopantothenate + ADP + H(+). It functions in the pathway cofactor biosynthesis; coenzyme A biosynthesis; CoA from (R)-pantothenate: step 1/5. The protein is Pantothenate kinase (coaA) of Halalkalibacterium halodurans (strain ATCC BAA-125 / DSM 18197 / FERM 7344 / JCM 9153 / C-125) (Bacillus halodurans).